We begin with the raw amino-acid sequence, 63 residues long: MATPKAKVSKSRRDKRRAQFTARSKAAETVTCPNCGEPTLPHRACRHCGHYRGRAVTKKSSNS.

Residues 1 to 23 form a disordered region; that stretch reads MATPKAKVSKSRRDKRRAQFTAR. Residues 7–18 are compositionally biased toward basic residues; it reads KVSKSRRDKRRA.

Belongs to the bacterial ribosomal protein bL32 family.

In Chlorobium phaeobacteroides (strain BS1), this protein is Large ribosomal subunit protein bL32.